Consider the following 194-residue polypeptide: 3-isopropylmalate dehydratase small subunit (194 aa).

Belongs to the LeuD family. LeuD type 1 subfamily. As to quaternary structure, heterodimer of LeuC and LeuD.

It catalyses the reaction (2R,3S)-3-isopropylmalate = (2S)-2-isopropylmalate. It functions in the pathway amino-acid biosynthesis; L-leucine biosynthesis; L-leucine from 3-methyl-2-oxobutanoate: step 2/4. Functionally, catalyzes the isomerization between 2-isopropylmalate and 3-isopropylmalate, via the formation of 2-isopropylmaleate. The polypeptide is 3-isopropylmalate dehydratase small subunit (Bacillus cereus (strain ATCC 14579 / DSM 31 / CCUG 7414 / JCM 2152 / NBRC 15305 / NCIMB 9373 / NCTC 2599 / NRRL B-3711)).